Here is a 415-residue protein sequence, read N- to C-terminus: Gamma-glutamyl phosphate reductase (415 aa).

It belongs to the gamma-glutamyl phosphate reductase family.

The protein resides in the cytoplasm. The enzyme catalyses L-glutamate 5-semialdehyde + phosphate + NADP(+) = L-glutamyl 5-phosphate + NADPH + H(+). It participates in amino-acid biosynthesis; L-proline biosynthesis; L-glutamate 5-semialdehyde from L-glutamate: step 2/2. In terms of biological role, catalyzes the NADPH-dependent reduction of L-glutamate 5-phosphate into L-glutamate 5-semialdehyde and phosphate. The product spontaneously undergoes cyclization to form 1-pyrroline-5-carboxylate. The chain is Gamma-glutamyl phosphate reductase from Clostridium perfringens (strain SM101 / Type A).